The sequence spans 1671 residues: Fatty acid synthase alpha subunit aflA (1671 aa).

The tract at residues 40-60 is disordered; sequence ITEEAPTEQPPLSTPPSLPQT. Residues 47-58 show a composition bias toward pro residues; it reads EQPPLSTPPSLP. The Carrier domain occupies 75-153; that stretch reads DVALSRVQIV…DANPTVQLGK (79 aa). Serine 113 is subject to O-(pantetheine 4'-phosphoryl)serine. Residues 492-729 are ketoreductase (KR) domain; it reads GKTFLVTGAG…AMLLTPDFVA (238 aa). Residues 926–1428 form the Ketosynthase family 3 (KS3) domain; that stretch reads MEVLQEVAVE…QKGGQVVGVA (503 aa). Cysteine 1113 serves as the catalytic For beta-ketoacyl synthase activity. The segment covering 1244–1270 has biased composition (low complexity); the sequence is SMISVTSRPSSRSSTSSEVSDKSSLTS. Residues 1244–1288 are disordered; it reads SMISVTSRPSSRSSTSSEVSDKSSLTSITSISNPAPRAQRARSTT. Residues histidine 1313 and histidine 1354 each act as for beta-ketoacyl synthase activity in the active site. The tract at residues 1497–1521 is disordered; sequence PSTGQYRFRSDATPALDDDALPPPG. Aspartate 1552 contacts Mg(2+). Residues 1552-1554, 1598-1608, 1622-1625, and 1652-1654 each bind acetyl-CoA; these read DLV, EAVFKCLQTHS, HGGN, and ISY. Serine 1653 contributes to the Mg(2+) binding site.

The protein belongs to the thiolase-like superfamily. Fungal fatty acid synthetase subunit alpha family. As to quaternary structure, [Alpha(6)beta(6)] hexamers of two multifunctional subunits (alpha and beta). Post-translationally, 4'-phosphopantetheine is transferred from CoA to a specific serine of the acyl carrier domain by the C-terminal PPT domain. This modification is essential for activity because fatty acids are bound in thioester linkage to the sulfhydryl of the prosthetic group.

It carries out the reaction acetyl-CoA + n malonyl-CoA + 2n NADPH + 4n H(+) = a long-chain-acyl-CoA + n CoA + n CO2 + 2n NADP(+).. The catalysed reaction is a fatty acyl-[ACP] + malonyl-[ACP] + H(+) = a 3-oxoacyl-[ACP] + holo-[ACP] + CO2. It catalyses the reaction a (3R)-hydroxyacyl-[ACP] + NADP(+) = a 3-oxoacyl-[ACP] + NADPH + H(+). Its pathway is mycotoxin biosynthesis; aflatoxin biosynthesis. Functionally, fatty acid synthase alpha subunit; part of the gene cluster that mediates the biosynthesis of aflatoxins, a group of polyketide-derived furanocoumarins, and part of the most toxic and carcinogenic compounds among the known mycotoxins. The four major aflatoxins produced by A.parasiticus are aflatoxin B1 (AFB1), aflatoxin B2 (AFB2), aflatoxin G1 (AFG1) and aflatoxin G2 (AFG2). Within the aflatoxin pathway, the fungal fatty acid synthase aflA/aflB provides the hexanoyl starter unit to the acyl-carrier protein (ACP) domain of the norsolorinic acid synthase to allow the first step of the pathway. The biosynthesis of aflatoxins begins with the norsolorinic acid synthase aflC that combines a hexanoyl starter unit produced by the fatty acid synthase aflA/aflB and 7 malonyl-CoA extender units to synthesize the precursor NOR. The second step is the conversion of NOR to averantin (AVN) and requires the norsolorinic acid ketoreductase aflD, which catalyzes the dehydration of norsolorinic acid to form (1'S)-averantin. The norsolorinic acid reductases aflE and aflF may also play a role in the conversion of NOR to AVN. The cytochrome P450 monooxygenase aflG then catalyzes the hydroxylation of AVN to 5'hydroxyaverantin (HAVN). The next step is performed by the 5'-hydroxyaverantin dehydrogenase aflH that transforms HAVN to 5'-oxoaverantin (OAVN) which is further converted to averufin (AVF) by aflK that plays a dual role in the pathway, as a 5'-oxoaverantin cyclase that mediates conversion of 5'-oxoaverantin, as well as a versicolorin B synthase in a later step in the pathway. The averufin oxidase aflI catalyzes the conversion of AVF to versiconal hemiacetal acetate (VHA). VHA is then the substrate for the versiconal hemiacetal acetate esterase aflJ to yield versiconal (VAL). Versicolorin B synthase aflK then converts VAL to versicolorin B (VERB) by closing the bisfuran ring of aflatoxin which is required for DNA-binding, thus giving to aflatoxin its activity as a mutagen. Then, the activity of the versicolorin B desaturase aflL leads to versicolorin A (VERA). A branch point starts from VERB since it can also be converted to dihydrodemethylsterigmatocystin (DMDHST), probably also by aflL, VERA being a precursor for aflatoxins B1 and G1, and DMDHST for aflatoxins B2 and G2. Next, the versicolorin reductase aflM and the cytochrome P450 monooxygenase aflN are involved in conversion of VERA to demethylsterigmatocystin (DMST). AflX and aflY seem also involved in this step, through probable aflX-mediated epoxide ring-opening step following versicolorin A oxidation and aflY-mediated Baeyer-Villiger oxidation required for the formation of the xanthone ring. The methyltransferase aflO then leads to the modification of DMST to sterigmatocystin (ST), and of DMDHST to dihydrosterigmatocystin (DHST). Both ST and DHST are then substrates of the O-methyltransferase aflP to yield O-methylsterigmatocystin (OMST) and dihydro-O-methylsterigmatocystin (DHOMST), respectively. Finally OMST is converted to aflatoxins B1 and G1, and DHOMST to aflatoxins B2 and G2, via the action of several enzymes including O-methylsterigmatocystin oxidoreductase aflQ, the cytochrome P450 monooxygenase aflU, but also the NADH-dependent flavin oxidoreductase nadA which is specifically required for the synthesis of AFG1. In Aspergillus parasiticus (strain ATCC 56775 / NRRL 5862 / SRRC 143 / SU-1), this protein is Fatty acid synthase alpha subunit aflA.